Reading from the N-terminus, the 122-residue chain is Histone H2B type 2-K1 (122 aa).

Residues 1-30 form a disordered region; the sequence is MSAEYGQRQQPGGRGGRSSGNKKSKKRCRR. Over residues 20–30 the composition is skewed to basic residues; that stretch reads GNKKSKKRCRR. Residue K31 is modified to N6-(2-hydroxyisobutyryl)lysine; alternate. K31 is modified (N6-(beta-hydroxybutyryl)lysine; alternate). K31 is modified (N6-crotonyllysine; alternate). Residue K31 is modified to N6-glutaryllysine; alternate. At K31 the chain carries N6-succinyllysine; alternate. A Glycyl lysine isopeptide (Lys-Gly) (interchain with G-Cter in ubiquitin); alternate cross-link involves residue K31. S33 carries the post-translational modification Phosphoserine. An N6-(2-hydroxyisobutyryl)lysine; alternate mark is found at K40, K43, and K54. An N6-glutaryllysine; alternate mark is found at K40 and K43. K40 bears the N6-lactoyllysine; alternate mark. N6-methyllysine is present on K43. K43 bears the N6-methyllysine; alternate mark. N6,N6-dimethyllysine is present on K54. Residue K54 is modified to N6,N6-dimethyllysine; alternate. R76 carries the dimethylated arginine modification. A Phosphoserine modification is found at S81. An omega-N-methylarginine mark is found at R83 and R89. K105 carries the N6-(2-hydroxyisobutyryl)lysine; alternate modification. K105 is subject to N6-glutaryllysine; alternate. K105 carries the N6-lactoyllysine; alternate modification. K105 carries the post-translational modification N6-methyllysine. K105 bears the N6-methyllysine; alternate mark. Residue S109 is glycosylated (O-linked (GlcNAc) serine). T112 is modified (phosphothreonine). N6-(2-hydroxyisobutyryl)lysine; alternate occurs at positions 113 and 117. Residues K113 and K117 each carry the N6-(beta-hydroxybutyryl)lysine; alternate modification. N6-glutaryllysine; alternate occurs at positions 113 and 117. 2 positions are modified to N6-succinyllysine; alternate: K113 and K117. K113 carries the post-translational modification N6-lactoyllysine; alternate. K113 carries the post-translational modification N6-malonyllysine; alternate. Position 113 is an N6-methylated lysine; alternate (K113). A Glycyl lysine isopeptide (Lys-Gly) (interchain with G-Cter in ubiquitin); alternate cross-link involves residue K117.

Belongs to the histone H2B family. In terms of assembly, the nucleosome is a histone octamer containing two molecules each of H2A, H2B, H3 and H4 assembled in one H3-H4 heterotetramer and two H2A-H2B heterodimers. The octamer wraps approximately 147 bp of DNA.

Its subcellular location is the chromosome. The protein resides in the nucleus. Functionally, core component of nucleosome. Nucleosomes wrap and compact DNA into chromatin, limiting DNA accessibility to the cellular machineries which require DNA as a template. Histones thereby play a central role in transcription regulation, DNA repair, DNA replication and chromosomal stability. DNA accessibility is regulated via a complex set of post-translational modifications of histones, also called histone code, and nucleosome remodeling. The protein is Histone H2B type 2-K1 of Homo sapiens (Human).